A 721-amino-acid chain; its full sequence is DNA ligase (721 aa).

The segment covering 1-19 (MTAKKQGAQASASAPSGDS) has biased composition (low complexity). Residues 1–23 (MTAKKQGAQASASAPSGDSPAER) are disordered. Residues 48 to 52 (DADYD), 97 to 98 (SL), and Glu-162 each bind NAD(+). Lys-164 acts as the N6-AMP-lysine intermediate in catalysis. NAD(+)-binding residues include Arg-185, Glu-221, Lys-338, and Lys-362. 4 residues coordinate Zn(2+): Cys-456, Cys-459, Cys-474, and Cys-480. Positions 639 to 721 (RAPLPLAGKT…LKLLAEVGAA (83 aa)) constitute a BRCT domain.

It belongs to the NAD-dependent DNA ligase family. LigA subfamily. It depends on Mg(2+) as a cofactor. Mn(2+) serves as cofactor.

The catalysed reaction is NAD(+) + (deoxyribonucleotide)n-3'-hydroxyl + 5'-phospho-(deoxyribonucleotide)m = (deoxyribonucleotide)n+m + AMP + beta-nicotinamide D-nucleotide.. DNA ligase that catalyzes the formation of phosphodiester linkages between 5'-phosphoryl and 3'-hydroxyl groups in double-stranded DNA using NAD as a coenzyme and as the energy source for the reaction. It is essential for DNA replication and repair of damaged DNA. In Cupriavidus metallidurans (strain ATCC 43123 / DSM 2839 / NBRC 102507 / CH34) (Ralstonia metallidurans), this protein is DNA ligase.